A 252-amino-acid polypeptide reads, in one-letter code: Flap endonuclease Xni (252 aa).

A Mg(2+)-binding site is contributed by aspartate 105. The 5'-3' exonuclease domain occupies 162 to 251 (EQYQFLDFIA…EINLKQFRVK (90 aa)). Residues leucine 172, alanine 173, proline 181, isoleucine 183, and isoleucine 186 each contribute to the K(+) site. The interval 185–190 (GIGPKS) is interaction with DNA.

The protein belongs to the Xni family. It depends on Mg(2+) as a cofactor. K(+) is required as a cofactor.

Functionally, has flap endonuclease activity. During DNA replication, flap endonucleases cleave the 5'-overhanging flap structure that is generated by displacement synthesis when DNA polymerase encounters the 5'-end of a downstream Okazaki fragment. The protein is Flap endonuclease Xni of Shewanella denitrificans (strain OS217 / ATCC BAA-1090 / DSM 15013).